A 274-amino-acid chain; its full sequence is Tropomyosin (274 aa).

A disordered region spans residues methionine 1–glutamate 30. Residues methionine 1 to tyrosine 274 adopt a coiled-coil conformation.

Belongs to the tropomyosin family. Homodimer.

In terms of biological role, tropomyosin, in association with the troponin complex, plays a central role in the calcium dependent regulation of muscle contraction. This is Tropomyosin from Panulirus stimpsoni (Chinese spiny lobster).